We begin with the raw amino-acid sequence, 706 residues long: Elongation factor G (706 aa).

Positions 12 to 288 constitute a tr-type G domain; that stretch reads EKTRNIGIMA…GVTNYLPSPN (277 aa). GTP is bound by residues 21–28, 85–89, and 139–142; these read AHIDAGKT, DTPGH, and NKMD. Residues 288 to 309 are disordered; that stretch reads NDVPAITGHHPQDKEEDITRHP. The segment covering 297–309 has biased composition (basic and acidic residues); that stretch reads HPQDKEEDITRHP.

This sequence belongs to the TRAFAC class translation factor GTPase superfamily. Classic translation factor GTPase family. EF-G/EF-2 subfamily.

The protein resides in the cytoplasm. In terms of biological role, catalyzes the GTP-dependent ribosomal translocation step during translation elongation. During this step, the ribosome changes from the pre-translocational (PRE) to the post-translocational (POST) state as the newly formed A-site-bound peptidyl-tRNA and P-site-bound deacylated tRNA move to the P and E sites, respectively. Catalyzes the coordinated movement of the two tRNA molecules, the mRNA and conformational changes in the ribosome. This Salinibacter ruber (strain DSM 13855 / M31) protein is Elongation factor G.